Reading from the N-terminus, the 145-residue chain is MKALLQRVGAARVEVGGEIVGSIDRGLLVLVGVEPEDGERCAAKMLHKLLNYRVFGDDEGKMNRSLLDVQGGLLLVSQFTLAANTRSGLRPSFSSAAPPAQGEAVFEHLVKLAREAYPQVATGRFGADMQVHLVNDGPVTFLLES.

The Gly-cisPro motif, important for rejection of L-amino acids signature appears at 137-138 (GP).

This sequence belongs to the DTD family. In terms of assembly, homodimer.

The protein localises to the cytoplasm. It catalyses the reaction glycyl-tRNA(Ala) + H2O = tRNA(Ala) + glycine + H(+). The enzyme catalyses a D-aminoacyl-tRNA + H2O = a tRNA + a D-alpha-amino acid + H(+). In terms of biological role, an aminoacyl-tRNA editing enzyme that deacylates mischarged D-aminoacyl-tRNAs. Also deacylates mischarged glycyl-tRNA(Ala), protecting cells against glycine mischarging by AlaRS. Acts via tRNA-based rather than protein-based catalysis; rejects L-amino acids rather than detecting D-amino acids in the active site. By recycling D-aminoacyl-tRNA to D-amino acids and free tRNA molecules, this enzyme counteracts the toxicity associated with the formation of D-aminoacyl-tRNA entities in vivo and helps enforce protein L-homochirality. The sequence is that of D-aminoacyl-tRNA deacylase from Pseudomonas aeruginosa (strain LESB58).